The chain runs to 547 residues: Sesterfisheric acid synthase (547 aa).

The chain crosses the membrane as a helical span at residues 19–39 (IMGCSLGTGLLVSMIIYNYFF). Residues N341 and N404 are each glycosylated (N-linked (GlcNAc...) asparagine). C490 serves as a coordination point for heme.

Belongs to the cytochrome P450 family. Requires heme as cofactor.

The protein resides in the membrane. The enzyme catalyses sesterfisherol + 3 reduced [NADPH--hemoprotein reductase] + 3 O2 = sesterfisherate + 3 oxidized [NADPH--hemoprotein reductase] + 4 H2O + 4 H(+). It functions in the pathway secondary metabolite biosynthesis; terpenoid biosynthesis. Its function is as follows. Cytochrome P450 monooxygenase; part of the gene cluster that mediates the biosynthesis of sesterfisheric acid. The bifunctional terpene synthase NfSS converts DMAPP and IPP, and also GGPP, into sesterfisherol. The C-terminal prenyltransferase (PT) domain of NfSS catalyzes formation of GFPP, whereas the N-terminal terpene cyclase (TC) domain catalyzes the cyclization of GFPP to sesterfisherol. The cytochrome P450 monooxygenase NfP450 then catalyzes oxidative modifications of sesterfisherol into sesterfisheric acid. The polypeptide is Sesterfisheric acid synthase (Neosartorya fischeri (strain ATCC 1020 / DSM 3700 / CBS 544.65 / FGSC A1164 / JCM 1740 / NRRL 181 / WB 181) (Aspergillus fischerianus)).